The following is a 642-amino-acid chain: Threonine--tRNA ligase (642 aa).

The region spanning 1–61 (MPVITLPDGS…DTDSELSIIT (61 aa)) is the TGS domain. The catalytic stretch occupies residues 243–534 (DHRKIGKQLD…LIEEYAGKFP (292 aa)). Zn(2+) contacts are provided by Cys334, His385, and His511.

It belongs to the class-II aminoacyl-tRNA synthetase family. As to quaternary structure, homodimer. It depends on Zn(2+) as a cofactor.

The protein resides in the cytoplasm. The enzyme catalyses tRNA(Thr) + L-threonine + ATP = L-threonyl-tRNA(Thr) + AMP + diphosphate + H(+). Catalyzes the attachment of threonine to tRNA(Thr) in a two-step reaction: L-threonine is first activated by ATP to form Thr-AMP and then transferred to the acceptor end of tRNA(Thr). Also edits incorrectly charged L-seryl-tRNA(Thr). This chain is Threonine--tRNA ligase, found in Shewanella sediminis (strain HAW-EB3).